The primary structure comprises 252 residues: 7-cyano-7-deazaguanine synthase (252 aa).

22 to 32 (FSGGQDSTTCL) contributes to the ATP binding site. The Zn(2+) site is built by Cys215, Cys230, Cys233, and Cys236.

The protein belongs to the QueC family. Zn(2+) serves as cofactor.

The enzyme catalyses 7-carboxy-7-deazaguanine + NH4(+) + ATP = 7-cyano-7-deazaguanine + ADP + phosphate + H2O + H(+). The protein operates within purine metabolism; 7-cyano-7-deazaguanine biosynthesis. Catalyzes the ATP-dependent conversion of 7-carboxy-7-deazaguanine (CDG) to 7-cyano-7-deazaguanine (preQ(0)). The polypeptide is 7-cyano-7-deazaguanine synthase (Granulibacter bethesdensis (strain ATCC BAA-1260 / CGDNIH1)).